The chain runs to 314 residues: MIKVVFMGTPDFSVPVLRRLIEDGYDVIGVVTQPDRPVGRKKVLTPTPVKVEAEKHGIPVLQPLRIREKDEYEKVLALEPDLIVTAAFGQIVPNEILEAPKYGCINVHASLLPELRGGAPIHYAIMEGKEKTGITIMYMVEKLDAGDILTQVEVEIEERETTGSLFDKLSEAGAHLLSKTVPLLIQGKLEPIKQNEEEVTFAYNIKREQEKIDWTKTGEEVYNHIRGLNPWPVAYTTLAGQVVKVWWGEKVPVTKSAEAGTIVAIEEDGFVVATGNETGVKVTELQPSGKKRMSCSQFLRGTKPEIGTKLGENA.

Position 110–113 (110–113 (SLLP)) interacts with (6S)-5,6,7,8-tetrahydrofolate.

The protein belongs to the Fmt family.

The catalysed reaction is L-methionyl-tRNA(fMet) + (6R)-10-formyltetrahydrofolate = N-formyl-L-methionyl-tRNA(fMet) + (6S)-5,6,7,8-tetrahydrofolate + H(+). Attaches a formyl group to the free amino group of methionyl-tRNA(fMet). The formyl group appears to play a dual role in the initiator identity of N-formylmethionyl-tRNA by promoting its recognition by IF2 and preventing the misappropriation of this tRNA by the elongation apparatus. The protein is Methionyl-tRNA formyltransferase of Bacillus cereus (strain AH187).